The chain runs to 182 residues: uncharacterized protein (182 aa).

Disordered stretches follow at residues 17-53 (AVSQ…QGSK) and 128-159 (DSLG…PKRS). Residues 42–53 (PQPQCPSAQGSK) are compositionally biased toward polar residues. Residues 129 to 138 (SLGSSASSSS) are compositionally biased toward low complexity.

This is an uncharacterized protein from Homo sapiens (Human).